A 221-amino-acid chain; its full sequence is Very-long-chain (3R)-3-hydroxyacyl-CoA dehydratase PASTICCINO 2 (221 aa).

Over 1-11 the chain is Cytoplasmic; sequence MAGFLSVVRRV. Residues 12–32 form a helical membrane-spanning segment; the sequence is YLTLYNWIVFAGWAQVLYLAI. Topologically, residues 33–51 are lumenal; the sequence is TTLKETGYENVYDAIEKPL. The helical transmembrane segment at 52–70 threads the bilayer; the sequence is QLAQTAAVLEILHGLVGLV. Residues 71 to 76 lie on the Cytoplasmic side of the membrane; that stretch reads RSPVSA. Residues 77–95 traverse the membrane as a helical segment; sequence TLPQIGSRLFLTWGILYSF. Over 96–100 the chain is Lumenal; the sequence is PEVRS. Residues 101-122 form a helical membrane-spanning segment; sequence HFLVTSLVISWSITEIIRYSFF. Residues 123–142 are Cytoplasmic-facing; that stretch reads GFKEALGFAPSWHLWLRYSS. A helical transmembrane segment spans residues 143–165; it reads FLLLYPTGITSEVGLIYLALPHI. Residues tyrosine 147 and glutamate 154 contribute to the active site. Over 166-184 the chain is Lumenal; sequence KTSEMYSVRMPNILNFSFD. Residues 185 to 204 form a helical membrane-spanning segment; that stretch reads FFYATILVLAIYVPGSPHMY. Residues 205 to 221 are Cytoplasmic-facing; sequence RYMLGQRKRALSKSKRE.

The protein belongs to the very long-chain fatty acids dehydratase HACD family. In terms of assembly, interacts with CDKA-1; but only with the 'Tyr-15' phosphorylated protein. Interacts with PAS1. Part of the fatty acid elongase complex which contains a beta-ketoacyl-CoA synthase (KCS), a beta-ketoacyl-CoA reductase (KCR), a beta-hydroxyacyl-CoA dehydratase (HCD) and an enoyl-CoA reductase (ECR). As to expression, high expression in young seedlings, roots, root tips, flowers and young siliques. Lower levels in leaves and stems.

The protein localises to the endoplasmic reticulum membrane. It localises to the cytoplasm. The protein resides in the nucleus. It carries out the reaction a very-long-chain (3R)-3-hydroxyacyl-CoA = a very-long-chain (2E)-enoyl-CoA + H2O. It functions in the pathway lipid metabolism; fatty acid biosynthesis. In terms of biological role, catalyzes the third of the four reactions of the long-chain fatty acids elongation cycle. This endoplasmic reticulum-bound enzymatic process, allows the addition of two carbons to the chain of long- and very long-chain fatty acids/VLCFAs per cycle. This enzyme catalyzes the dehydration of the 3-hydroxyacyl-CoA intermediate into trans-2,3-enoyl-CoA, within each cycle of fatty acid elongation. Thereby, it participates in the production of VLCFAs of different chain lengths that are involved in multiple biological processes as precursors of membrane lipids and lipid mediators. May be an anti-phosphatase that prevents CDKA-1 dephosphorylation and activation. Involved in the hormonal control of cell division and differentiation. Required for proliferation control of meristematic and non-meristematic cells. Negative regulator of the cell cycle. This is Very-long-chain (3R)-3-hydroxyacyl-CoA dehydratase PASTICCINO 2 (PAS2) from Arabidopsis thaliana (Mouse-ear cress).